The following is a 555-amino-acid chain: Energy-dependent translational throttle protein EttA (555 aa).

2 consecutive ABC transporter domains span residues 6-259 (YTMH…AQEA) and 324-550 (LEVS…RIKY). 39-46 (GLNGAGKS) contacts ATP. The segment at 95 to 139 (SEVVNALKRLDEVYALYADPDADFDKLAAEQGRLEEIIQAHDGHN) is arm. Residues 242-322 (GNYSSWLEQK…IPPGPRLGDK (81 aa)) form a ptIM region. An ATP-binding site is contributed by 356–363 (GPNGAGKS).

The protein belongs to the ABC transporter superfamily. ABCF family. Translational throttle EttA subfamily. Monomer. Probably contacts ribosomal proteins L1, L5, L33 and S7, the 16S and 23S rRNA and the P-site containing tRNA(fMet).

It localises to the cytoplasm. It catalyses the reaction ATP + H2O = ADP + phosphate + H(+). Functionally, a translation factor that gates the progression of the 70S ribosomal initiation complex (IC, containing tRNA(fMet) in the P-site) into the translation elongation cycle by using a mechanism sensitive to the ATP/ADP ratio. Binds to the 70S ribosome E-site where it modulates the state of the translating ribosome during subunit translocation. ATP hydrolysis probably frees it from the ribosome, which can enter the elongation phase. This Escherichia coli O6:H1 (strain CFT073 / ATCC 700928 / UPEC) protein is Energy-dependent translational throttle protein EttA.